Reading from the N-terminus, the 238-residue chain is Probable metal transport system ATP-binding protein TP_0035 (238 aa).

Positions 10-231 (VLLQNVSFRY…LDMQKKDALA (222 aa)) constitute an ABC transporter domain. 44 to 51 (GENGSGKS) contacts ATP.

This sequence belongs to the ABC transporter superfamily.

It localises to the cell inner membrane. Functionally, part of an ATP-driven transport system TP_0034/TP_0035/TP_0036 for a metal. Probably responsible for energy coupling to the transport system. The protein is Probable metal transport system ATP-binding protein TP_0035 of Treponema pallidum (strain Nichols).